Consider the following 1488-residue polypeptide: Putative E3 ubiquitin-protein ligase LIN (1488 aa).

Disordered regions lie at residues 297 to 330, 351 to 414, and 432 to 500; these read GFSM…EQSS, YDAS…PLRR, and IVSD…SSSS. Residues 366–380 are compositionally biased toward basic and acidic residues; that stretch reads EPKKNIKDEDVEPKV. The span at 382–411 shows a compositional bias: polar residues; the sequence is RSNQKNQMNSPNISPMESPRRASNYSSTNP. A compositionally biased stretch (low complexity) spans 432–444; the sequence is IVSDHSLSSSPDT. Residues 468 to 486 are compositionally biased toward polar residues; the sequence is SQTPSMNQDNENSLVLNDS. In terms of domain architecture, U-box spans 512–587; the sequence is KPPKDFVCPI…VSWKEQNPEL (76 aa). WD repeat units follow at residues 1207-1244, 1249-1290, 1412-1451, and 1456-1488; these read SSNG…PRVI, EHKK…DVYD, SLST…RVAS, and GGNT…WALD.

Expressed in roots and nodules.

It carries out the reaction S-ubiquitinyl-[E2 ubiquitin-conjugating enzyme]-L-cysteine + [acceptor protein]-L-lysine = [E2 ubiquitin-conjugating enzyme]-L-cysteine + N(6)-ubiquitinyl-[acceptor protein]-L-lysine.. The protein operates within protein modification; protein ubiquitination. Its function is as follows. Putative E3 ubiquitin ligase involved in the rhizobial infection process. Plays an important role in the early steps of bacterial symbiont thread formation in roots, and in growth, differentiation and maintenance of nodules. The sequence is that of Putative E3 ubiquitin-protein ligase LIN from Medicago truncatula (Barrel medic).